A 183-amino-acid chain; its full sequence is Protein Syd (183 aa).

The protein belongs to the Syd family.

It localises to the cell inner membrane. Its function is as follows. Interacts with the SecY protein in vivo. May bind preferentially to an uncomplexed state of SecY, thus functioning either as a chelating agent for excess SecY in the cell or as a regulatory factor that negatively controls the translocase function. This chain is Protein Syd, found in Yersinia pseudotuberculosis serotype O:1b (strain IP 31758).